A 312-amino-acid chain; its full sequence is MEDRREALISKLMNMLVENGFSVSGTGFQPVATFDIVARRDVERYILKVLYNIDTLKQSTAYQLIKLAKLLRATAAIIGERTGNGQLEDGVVYYRHGVPISSVNTFESYLNGERPYIYSGPGGFYVRINGELLRERRNELNLSIGNISSYLGVSRRSVSLYENGSAATIDIFIRLRNILKADIVDHIDLFRINSTEINFEEKISDEYIARIIWLLQKYGLDTRPIFKVPFDIVAKDSDEISLIAALIGDAPEPERVRILKKISDVFEDDAFLVSKSNTYRESIGGCAVLTISDLESIEDKDALIGKIEKRAK.

The HTH cro/C1-type domain occupies Leu-133–His-186. Residues Ile-144 to Asn-163 constitute a DNA-binding region (H-T-H motif).

This Thermoplasma volcanium (strain ATCC 51530 / DSM 4299 / JCM 9571 / NBRC 15438 / GSS1) protein is Putative HTH-type transcriptional regulatory protein TV0294.